Here is a 745-residue protein sequence, read N- to C-terminus: Kinesin-like protein KIN-14M (745 aa).

Residues 1–31 (MVGEMTNNGRIRPSFPVKDLTSNEGSEYGGP) form a disordered region. Residues 1-35 (MVGEMTNNGRIRPSFPVKDLTSNEGSEYGGPVEFT) form a globular region. 2 microtubule-binding regions span residues 65-77 (YVKR…RWFQ) and 198-745 (SLQL…LSLG). Coiled coils occupy residues 76–223 (FQEL…GEKE) and 259–389 (KDEL…GNIR). The region spanning 387 to 724 (NIRVFCRVRP…LRFAARVNAC (338 aa)) is the Kinesin motor domain. 472–479 (GQTGSGKT) serves as a coordination point for ATP.

Belongs to the TRAFAC class myosin-kinesin ATPase superfamily. Kinesin family. KIN-14 subfamily. As to quaternary structure, bind to microtubules in an ATP-insensitive manner (in vitro). Homodimer and heterodimer with KIN14N/KATC (in vitro).

It localises to the cytoplasm. The protein localises to the cytoskeleton. The chain is Kinesin-like protein KIN-14M from Arabidopsis thaliana (Mouse-ear cress).